The primary structure comprises 523 residues: (R)-citramalate synthase (523 aa).

Residues 6–272 (VEVLDTTLRD…KGNESLKKLK (267 aa)) form the Pyruvate carboxyltransferase domain.

The protein belongs to the alpha-IPM synthase/homocitrate synthase family.

The enzyme catalyses pyruvate + acetyl-CoA + H2O = (3R)-citramalate + CoA + H(+). Its pathway is amino-acid biosynthesis; L-isoleucine biosynthesis; 2-oxobutanoate from pyruvate: step 1/3. With respect to regulation, inhibited by isoleucine. Catalyzes the condensation of pyruvate and acetyl-coenzyme A to form (R)-citramalate. Makes part of a pathway for isoleucine biosynthesis, i.e. the citramalate-dependent pathway. Also displays a low alpha-isopropylmalate synthase activity, using 2-oxoisovalerate as substrate, but is unable to use 2-oxoglutarate. The polypeptide is (R)-citramalate synthase (Sulfolobus acidocaldarius (strain ATCC 33909 / DSM 639 / JCM 8929 / NBRC 15157 / NCIMB 11770)).